The following is a 608-amino-acid chain: Auxin response factor 3 (608 aa).

Residues Met1–Ser40 are disordered. The span at Gln18 to Ser40 shows a compositional bias: low complexity. The segment at residues Phe159 to Ser261 is a DNA-binding region (TF-B3).

Belongs to the ARF family. Homo and heterodimers. In terms of tissue distribution, expressed in the whole plant.

The protein resides in the nucleus. Auxin response factors (ARFs) are transcriptional factors that bind specifically to the DNA sequence 5'-TGTCTC-3' found in the auxin-responsive promoter elements (AuxREs). Could act as transcriptional activator or repressor. Formation of heterodimers with Aux/IAA proteins may alter their ability to modulate early auxin response genes expression. Involved in the establishment or elaboration of tissue patterning during gynoecial development. The sequence is that of Auxin response factor 3 (ARF3) from Arabidopsis thaliana (Mouse-ear cress).